The chain runs to 251 residues: Tachykinins (251 aa).

An N-terminal signal peptide occupies residues 1–21; it reads MGAPRTCLIFITIQLVSLAYA. Residues 22–25 constitute a propeptide that is removed on maturation; that stretch reads QEVS. Residue arginine 36 is modified to Arginine amide. Positions 39–50 are excised as a propeptide; the sequence is KYFDEEGIEQFY. A Lysine amide modification is found at lysine 61. Residues 65–163 constitute a propeptide that is removed on maturation; that stretch reads SLQDILEAPE…MEPEQSNDLD (99 aa). Arginine 176 is modified (arginine amide). The propeptide occupies 180–183; it reads SINN. An Arginine amide modification is found at arginine 199. Positions 203–223 are excised as a propeptide; sequence DLKNSNAHEIKFLVDQNGPLP. Arginine 235 is modified (arginine amide). Positions 239–251 are excised as a propeptide; the sequence is WTDEPSLEMDMPN.

It belongs to the tachykinin family. Tachykinin-related peptide 1: Expressed in antennal lobe (AL) and gnathal ganglion (GNG) (at protein level). Expression in AL detected in all animals, in GNG in most animals (at protein level). Not expressed in corpora cardiaca (CC) and corpora allata (CA) (at protein level). Tachykinin-related peptide 2: Expressed in antennal lobe (AL) corpora cardiaca (CC) and corpora allata (CA) with expression detected in few animals (at protein level). Not expressed in gnathal ganglion (GNG) (at protein level). Tachykinin-related peptide 4: Expressed in corpora cardiaca (CC), corpora allata (CA), antennal lobe (AL) and gnathal ganglion (GNG) (at protein level). Expression in AL and GNG detected in most animals, in CC and CA detected in few animals (at protein level). Tachykinin-related peptide 5: Expressed in corpora cardiaca (CC), corpora allata (CA), antennal lobe (AL) and gnathal ganglion (GNG) (at protein level). Expression in CC and CA detected in some animals, in AL and GNG in few animals (at protein level). Tachykinin-related peptide 6: Expressed in antennal lobe (AL) and gnathal ganglion (GNG) (at protein level). Expression in AL detected in all animals, in GNG in some animals (at protein level). Not expressed in corpora cardiaca (CC) and corpora allata (CA) (at protein level).

The protein resides in the secreted. Tachykinins are active peptides which excite neurons, evoke behavioral responses, are potent vasodilators and secretagogues, and contract (directly or indirectly) many smooth muscles. The protein is Tachykinins of Agrotis ipsilon (Black cutworm moth).